A 263-amino-acid chain; its full sequence is MDQTPRRMLGQPLSSPATQPKKRSTSVMSFFSKVSWNLRLQKQEPLKNVFFILAETARDPSVKKRHMVMRGLGTMACETPDKVRKYKKIILDLLVHGLYDPVSSEVIHESMKTLTIILGKMQGKALGSFFIDITLQTRTLLDDENDSLRYSAFVLFGQLADLAGRKWKSFFTRQVKQTQDSLLTHLQDRNPQVAKACKTTFRACSPYLRQSKDYSFQNEEDQRNPKLCRQLVSERGQETFFQSLRSRCRCKAEGGRHTRELPP.

A disordered region spans residues 1–21; the sequence is MDQTPRRMLGQPLSSPATQPK. Residues 128–163 form an HEAT repeat; it reads SFFIDITLQTRTLLDDENDSLRYSAFVLFGQLADLA.

It localises to the nucleus. The protein resides in the nucleolus. This is Protein maestro (MRO) from Bos taurus (Bovine).